The primary structure comprises 603 residues: NADH-ubiquinone oxidoreductase chain 5 (603 aa).

16 consecutive transmembrane segments (helical) span residues 4-24, 38-58, 87-107, 117-137, 140-160, 171-191, 211-233, 241-261, 273-293, 301-320, 331-351, 366-386, 409-429, 457-477, 488-508, and 583-603; these read LPTL…LSPL, MAVS…MHSG, LIFM…SLWY, FFKY…ANNL, LFIG…WWYG, AMIY…WFLL, LPLT…HPWL, TPVS…FLLI, ILTL…ICAL, IIAF…IGIN, THAF…HSLG, LPFT…MPFL, LLIT…IIFF, LMLG…PTTV, FMAL…SSFT, and MIKL…LLII.

Belongs to the complex I subunit 5 family.

It is found in the mitochondrion inner membrane. It catalyses the reaction a ubiquinone + NADH + 5 H(+)(in) = a ubiquinol + NAD(+) + 4 H(+)(out). In terms of biological role, core subunit of the mitochondrial membrane respiratory chain NADH dehydrogenase (Complex I) that is believed to belong to the minimal assembly required for catalysis. Complex I functions in the transfer of electrons from NADH to the respiratory chain. The immediate electron acceptor for the enzyme is believed to be ubiquinone. The chain is NADH-ubiquinone oxidoreductase chain 5 (MT-ND5) from Dugong dugon (Dugong).